A 450-amino-acid polypeptide reads, in one-letter code: ATP-dependent protease ATPase subunit HslU (450 aa).

Residues V29, 71 to 76, D261, E328, and R400 contribute to the ATP site; that span reads GVGKTE.

It belongs to the ClpX chaperone family. HslU subfamily. In terms of assembly, a double ring-shaped homohexamer of HslV is capped on each side by a ring-shaped HslU homohexamer. The assembly of the HslU/HslV complex is dependent on binding of ATP.

The protein localises to the cytoplasm. Functionally, ATPase subunit of a proteasome-like degradation complex; this subunit has chaperone activity. The binding of ATP and its subsequent hydrolysis by HslU are essential for unfolding of protein substrates subsequently hydrolyzed by HslV. HslU recognizes the N-terminal part of its protein substrates and unfolds these before they are guided to HslV for hydrolysis. This chain is ATP-dependent protease ATPase subunit HslU, found in Rickettsia rickettsii (strain Iowa).